A 440-amino-acid chain; its full sequence is Deoxyguanosinetriphosphate triphosphohydrolase-like protein (440 aa).

An HD domain is found at 62 to 255; that stretch reads RLTHSLEAAQ…MELADDIAYG (194 aa).

This sequence belongs to the dGTPase family. Type 2 subfamily.

This Vibrio parahaemolyticus serotype O3:K6 (strain RIMD 2210633) protein is Deoxyguanosinetriphosphate triphosphohydrolase-like protein.